Reading from the N-terminus, the 427-residue chain is Terminal nucleotidyltransferase 5B (427 aa).

Positions 1–11 are enriched in acidic residues; sequence MMPSESGDESL. Residues 1–46 form a disordered region; the sequence is MMPSESGDESLEQPAAQVGTGAASAVATAGAAGGGPDLEASSASLG. The span at 15–30 shows a compositional bias: low complexity; it reads AAQVGTGAASAVATAG.

Belongs to the TENT family.

It localises to the cytoplasm. The protein localises to the nucleus. It catalyses the reaction RNA(n) + ATP = RNA(n)-3'-adenine ribonucleotide + diphosphate. Functionally, catalyzes the transfer of one adenosine molecule from an ATP to an mRNA poly(A) tail bearing a 3'-OH terminal group in an ATP hydrolysis-dependent manner. May be involved in maintaining the translation efficiency of at least some genes through preventing degradation of their mRNAs. Prefers RNA molecules that are adenosine-rich close to 3'-end. In addition, may inhibit cell proliferation and cell cycle progression through ubiquitination of beta-catenin/CTNNB1. In Rattus norvegicus (Rat), this protein is Terminal nucleotidyltransferase 5B.